Reading from the N-terminus, the 275-residue chain is Vitamin B12-binding protein (275 aa).

A signal peptide spans 1–27; it reads MKWIKSTGSIGLSLLLFLSSFSHSLYA. A Fe/B12 periplasmic-binding domain is found at 31–275; sequence RVISLSPSTT…LCQQLNDNGS (245 aa). Tyr58 is a binding site for cyanocob(III)alamin. The cysteines at positions 191 and 267 are disulfide-linked.

The protein belongs to the BtuF family. In terms of assembly, the complex is composed of two ATP-binding proteins (BtuD), two transmembrane proteins (BtuC) and a solute-binding protein (BtuF).

It is found in the periplasm. Its function is as follows. Part of the ABC transporter complex BtuCDF involved in vitamin B12 import. Binds vitamin B12 and delivers it to the periplasmic surface of BtuC. This chain is Vitamin B12-binding protein, found in Photorhabdus laumondii subsp. laumondii (strain DSM 15139 / CIP 105565 / TT01) (Photorhabdus luminescens subsp. laumondii).